The following is a 280-amino-acid chain: Fructose-1,6-bisphosphatase class 1 (280 aa).

Mg(2+) contacts are provided by Glu64, Asp83, Leu85, and Asp86. Residues 86 to 89, Tyr189, and Lys220 each bind substrate; that span reads DGSS. Residue Glu226 coordinates Mg(2+).

The protein belongs to the FBPase class 1 family. In terms of assembly, homotetramer. Mg(2+) is required as a cofactor.

It localises to the cytoplasm. The enzyme catalyses beta-D-fructose 1,6-bisphosphate + H2O = beta-D-fructose 6-phosphate + phosphate. The protein operates within carbohydrate biosynthesis; gluconeogenesis. The polypeptide is Fructose-1,6-bisphosphatase class 1 (Campylobacter jejuni subsp. jejuni serotype O:2 (strain ATCC 700819 / NCTC 11168)).